A 920-amino-acid chain; its full sequence is KIN14B-interacting protein At4g14310 (920 aa).

The segment covering 1 to 10 (MSASTNRRRL) has biased composition (basic residues). Disordered regions lie at residues 1–199 (MSAS…EKST) and 309–375 (IDGP…EKPS). Residues 35–54 (PISSKNSNPALQKSLSSKEN) are compositionally biased toward polar residues. The span at 90–105 (TRSTSSGLRGRSSSPS) shows a compositional bias: low complexity. Positions 112–135 (SDLRKRNESRVIGEKGESGQDKKS) are enriched in basic and acidic residues. Polar residues-rich tracts occupy residues 137 to 147 (LKSSGFKQGTS) and 166 to 184 (CPVN…NSIS). A compositionally biased stretch (basic and acidic residues) spans 327 to 337 (LNKEELEDRLL). Over residues 345-355 (SRTQSKTSSHV) the composition is skewed to polar residues. The span at 357-374 (KGHDSVESNKAVNAEEKP) shows a compositional bias: basic and acidic residues. The stretch at 435 to 463 (TEILRANEALEEIDDEENREEMELEEIDD) forms a coiled coil.

Interacts with KIN14B, CDKA-1, CKS1 and CKS2.

The protein resides in the cytoplasm. Functionally, might be involved in division plane determination. This chain is KIN14B-interacting protein At4g14310, found in Arabidopsis thaliana (Mouse-ear cress).